A 302-amino-acid polypeptide reads, in one-letter code: MDDTALLQEEILRLKEKKNAILLAHNYQRPEVQDIADLTGDSLELARAAAAMQGDTIVFCGVDFMAETAAILAPDKTVLLPAADACCPMAEMVTAEELRFARARHPGAAVVCYVNTTAGVKAESDICCTSANAISVVNSLTEDRVIFVPDKNLGRYAARFTEKKVLPWEGFCLVHDRYTPDDVARAKDAHPGAAVVVHPECRPEVIDLADHVASTSGIIRYVQTSPGSEFIIGTEIGILHRLSKECPGKRCFPLSDKAVCVNMKKTTLVHVRDALVTGQPRITVPDEIASRARRAIGRMLAL.

The iminosuccinate site is built by H25 and S42. Residue C87 participates in [4Fe-4S] cluster binding. Residues Y113–N115 and S130 each bind iminosuccinate. Position 172 (C172) interacts with [4Fe-4S] cluster. Residues H198–E200 and T215 each bind iminosuccinate. C260 contributes to the [4Fe-4S] cluster binding site.

It belongs to the quinolinate synthase family. Type 2 subfamily. It depends on [4Fe-4S] cluster as a cofactor.

The protein localises to the cytoplasm. The enzyme catalyses iminosuccinate + dihydroxyacetone phosphate = quinolinate + phosphate + 2 H2O + H(+). It participates in cofactor biosynthesis; NAD(+) biosynthesis; quinolinate from iminoaspartate: step 1/1. Functionally, catalyzes the condensation of iminoaspartate with dihydroxyacetone phosphate to form quinolinate. The sequence is that of Quinolinate synthase from Methanoregula boonei (strain DSM 21154 / JCM 14090 / 6A8).